A 423-amino-acid polypeptide reads, in one-letter code: UPF0597 protein Emin_0811 (423 aa).

It belongs to the UPF0597 family.

This chain is UPF0597 protein Emin_0811, found in Elusimicrobium minutum (strain Pei191).